A 492-amino-acid polypeptide reads, in one-letter code: Transcript termination protein A18 (492 aa).

The region spanning 100-256 is the Helicase ATP-binding domain; sequence MIELKRPLYI…NSIINIAKLS (157 aa). Residue 113 to 120 coordinates ATP; sequence LACGFGKT. A DESH box motif is present at residues 206–209; the sequence is DESH.

It belongs to the helicase family. Poxviruses subfamily. In terms of assembly, interacts with G2. Might be part of a transcription complex composed at least of G2, A18, and H5.

Its subcellular location is the virion. DNA helicase which seems to act as a postreplicative transcription termination factor. Involved in ATP-dependent release of nascent RNA. Forms a stable complex with single-stranded DNA, and to a lesser extent RNA. In Bos taurus (Bovine), this protein is Transcript termination protein A18.